We begin with the raw amino-acid sequence, 209 residues long: NAD(P)H-quinone oxidoreductase subunit I (209 aa).

4Fe-4S ferredoxin-type domains are found at residues 55-84 and 95-124; these read GRIH…VDYE and NSYS…MTEE. 8 residues coordinate [4Fe-4S] cluster: C64, C67, C70, C74, C104, C107, C110, and C114.

The protein belongs to the complex I 23 kDa subunit family. As to quaternary structure, NDH-1 is composed of at least 11 different subunits. It depends on [4Fe-4S] cluster as a cofactor.

It localises to the cell inner membrane. It carries out the reaction a plastoquinone + NADH + (n+1) H(+)(in) = a plastoquinol + NAD(+) + n H(+)(out). It catalyses the reaction a plastoquinone + NADPH + (n+1) H(+)(in) = a plastoquinol + NADP(+) + n H(+)(out). Its function is as follows. NDH-1 shuttles electrons from an unknown electron donor, via FMN and iron-sulfur (Fe-S) centers, to quinones in the respiratory and/or the photosynthetic chain. The immediate electron acceptor for the enzyme in this species is believed to be plastoquinone. Couples the redox reaction to proton translocation, and thus conserves the redox energy in a proton gradient. This chain is NAD(P)H-quinone oxidoreductase subunit I, found in Gloeobacter violaceus (strain ATCC 29082 / PCC 7421).